Consider the following 222-residue polypeptide: Charged multivesicular body protein 3 (222 aa).

Gly-2 is lipidated: N-myristoyl glycine. Residues 2-113 are intramolecular interaction with C-terminus; it reads GLFGKTQEKP…LQKSTEVMKA (112 aa). Residues 22–54 are a coiled coil; the sequence is KIRKEMRVVDRQIRDIQREEEKVKRSVKDAAKK. Important for autoinhibitory function stretches follow at residues 59 to 64 and 168 to 169; these read VCVVLA and IL. Residues 149-222 are a coiled coil; it reads ESMDDQEEME…MQSRLATLRS (74 aa). The segment at 151 to 220 is intramolecular interaction with N-terminus; it reads MDDQEEMEEA…EAMQSRLATL (70 aa). The tract at residues 151-222 is interaction with VPS4A; it reads MDDQEEMEEA…MQSRLATLRS (72 aa). Lys-179 is covalently cross-linked (Glycyl lysine isopeptide (Lys-Gly) (interchain with G-Cter in ubiquitin)). Residues 180–222 form a disordered region; sequence APSKVTDALPEPEPSGAMAASDEEEEEEEALEAMQSRLATLRS. Interaction with STAMBP regions lie at residues 196 to 222, 203 to 207, and 221 to 222; these read AMAA…TLRS, EEEEE, and RS. Ser-200 carries the phosphoserine modification. A compositionally biased stretch (acidic residues) spans 200–210; the sequence is SDEEEEEEEAL. Positions 201 to 211 match the MIT-interacting motif motif; sequence DEEEEEEEALE.

The protein belongs to the SNF7 family. As to quaternary structure, probable core component of the endosomal sorting required for transport complex III (ESCRT-III). ESCRT-III components are thought to multimerize to form a flat lattice on the perimeter membrane of the endosome. Several assembly forms of ESCRT-III may exist that interact and act sequentially. Forms a metastable monomer in solution; its core structure (without part of the putative autoinhibitory C-terminal acidic region) oligomerizes into a flat lattice via two different dimerization interfaces. In vitro, heteromerizes with CHMP2A (but not CHMP4) to form helical tubular structures that expose membrane-interacting sites on the outside whereas VPS4B can associate on the inside of the tubule. May interact with IGFBP7; the relevance of such interaction however remains unclear. Interacts with CHMP2A. Interacts with CHMP4A; the interaction requires the release of CHMP4A autoinhibition. Interacts with VPS4A. Interacts with STAMBP; the interaction appears to relieve the autoinhibition of CHMP3. Interacts with VTA1.

Its subcellular location is the cytoplasm. It is found in the cytosol. It localises to the membrane. The protein resides in the endosome. The protein localises to the late endosome membrane. In terms of biological role, probable core component of the endosomal sorting required for transport complex III (ESCRT-III) which is involved in multivesicular bodies (MVBs) formation and sorting of endosomal cargo proteins into MVBs. MVBs contain intraluminal vesicles (ILVs) that are generated by invagination and scission from the limiting membrane of the endosome and mostly are delivered to lysosomes enabling degradation of membrane proteins, such as stimulated growth factor receptors, lysosomal enzymes and lipids. The MVB pathway appears to require the sequential function of ESCRT-O, -I,-II and -III complexes. ESCRT-III proteins mostly dissociate from the invaginating membrane before the ILV is released. The ESCRT machinery also functions in topologically equivalent membrane fission events, such as the terminal stages of cytokinesis and the budding of enveloped viruses (lentiviruses). ESCRT-III proteins are believed to mediate the necessary vesicle extrusion and/or membrane fission activities, possibly in conjunction with the AAA ATPase VPS4. Selectively binds to phosphatidylinositol 3,5-bisphosphate PtdIns(3,5)P2 and PtdIns(3,4)P2 in preference to other phosphoinositides tested. Involved in late stages of cytokinesis. Plays a role in endosomal sorting/trafficking of EGF receptor. The chain is Charged multivesicular body protein 3 (CHMP3) from Macaca fascicularis (Crab-eating macaque).